The sequence spans 213 residues: ATP phosphoribosyltransferase (213 aa).

This sequence belongs to the ATP phosphoribosyltransferase family. Short subfamily. As to quaternary structure, heteromultimer composed of HisG and HisZ subunits.

It localises to the cytoplasm. It catalyses the reaction 1-(5-phospho-beta-D-ribosyl)-ATP + diphosphate = 5-phospho-alpha-D-ribose 1-diphosphate + ATP. Its pathway is amino-acid biosynthesis; L-histidine biosynthesis; L-histidine from 5-phospho-alpha-D-ribose 1-diphosphate: step 1/9. Catalyzes the condensation of ATP and 5-phosphoribose 1-diphosphate to form N'-(5'-phosphoribosyl)-ATP (PR-ATP). Has a crucial role in the pathway because the rate of histidine biosynthesis seems to be controlled primarily by regulation of HisG enzymatic activity. This chain is ATP phosphoribosyltransferase, found in Synechococcus sp. (strain RCC307).